The sequence spans 952 residues: GATA zinc finger domain-containing protein 5 (952 aa).

2 disordered regions span residues 1–36 (MDYQLHEGKQISQEFPTDISTTKSSDLKSRKTDSPS) and 138–197 (PTPL…SPKQ). Over residues 10-24 (QISQEFPTDISTTKS) the composition is skewed to polar residues. Residues 148–157 (SPPPPPPPPA) are compositionally biased toward pro residues. Residues 158–196 (ATTTTTITTTTTTSAGNSTTKNNNNNNNNNNNNNGKSPK) show a composition bias toward low complexity. The GATA-type zinc-finger motif lies at 241-266 (CYQCNTSNTPEWRKGPEGPATLCNAC). Disordered stretches follow at residues 380-418 (MTPSNSFFTGKPIKTTKTKPKPKSKSKPGKITHTKHEQP), 433-478 (LLSS…GGGG), 634-699 (QNNS…NKNN), and 732-816 (QQQE…LSVN). The span at 393 to 412 (KTTKTKPKPKSKSKPGKITH) shows a compositional bias: basic residues. Over residues 445-467 (SSSSSCGTSLNSSLGSSSGTITN) the composition is skewed to low complexity. Positions 468-478 (SGGGSSGGGGG) are enriched in gly residues. Over residues 634-653 (QNNSFSGPNDQNPYVPSVSL) the composition is skewed to polar residues. 3 stretches are compositionally biased toward low complexity: residues 654–668 (NSNKTTNIKNNNNNK), 678–699 (NNKNNNNNTKINNHHINNNKNN), and 732–745 (QQQEQQKQQEEQQQ). Positions 746–762 (NLSINNSNQTNENEILG) are enriched in polar residues. Residues 763 to 814 (TTTTTTTSTATIITSQVPMNLSPNSDDNQSSSNYSTLSDSGSSPTDSFSGLS) are compositionally biased toward low complexity.

This Dictyostelium discoideum (Social amoeba) protein is GATA zinc finger domain-containing protein 5 (gtaE).